Consider the following 670-residue polypeptide: uncharacterized protein (670 aa).

10 helical membrane-spanning segments follow: residues 23–42 (YALRNTIAMCLALTVAYYLN), 47–69 (YWAMTSAAVVSFPTVGGVISKSL), 76–98 (LLGAIAALLLAGHTLNEPWFFLL), 118–140 (VAYAFQLAGYTAAIIAFPMVNIT), 153–170 (VCEVIVGILCGGMMMMIL), 381–403 (QWDAGANALTLAAISCVLYSAVA), 410–432 (SLLMRTLVLLSLFSFVVKFGLMV), 437–454 (LWQFLLFLFPLLATMQLL), 461–483 (FAALWGQLIVFMGSFIAVTNPPV), and 493–510 (NLAKIVGVALAWLAFAIL).

It belongs to the aromatic acid exporter ArAE (TC 2.A.85) family.

It localises to the cell membrane. This is an uncharacterized protein from Escherichia coli (strain K12).